A 276-amino-acid polypeptide reads, in one-letter code: Type II pantothenate kinase (276 aa).

8–15 (DAGGTLTK) is an ATP binding site. The active-site Proton acceptor is the E76. ATP-binding positions include T105, 127–131 (GGTIM), F143, and S230.

It belongs to the type II pantothenate kinase family. Homodimer.

The protein localises to the cytoplasm. It carries out the reaction (R)-pantothenate + ATP = (R)-4'-phosphopantothenate + ADP + H(+). It functions in the pathway cofactor biosynthesis; coenzyme A biosynthesis; CoA from (R)-pantothenate: step 1/5. In terms of biological role, catalyzes the phosphorylation of pantothenate (Pan), the first step in CoA biosynthesis. In Bacillus cereus (strain ZK / E33L), this protein is Type II pantothenate kinase.